We begin with the raw amino-acid sequence, 122 residues long: MICOS complex subunit MIC13 homolog QIL1 (122 aa).

A helical membrane pass occupies residues 9 to 25 (GGLVAATVYYTQKVGIW).

Belongs to the MICOS complex subunit Mic13 family. In terms of assembly, component of the mitochondrial contact site and cristae organizing system (MICOS) complex.

It is found in the mitochondrion inner membrane. Functionally, component of the MICOS complex, a large protein complex of the mitochondrial inner membrane that plays crucial roles in the maintenance of crista junctions, inner membrane architecture, and formation of contact sites to the outer membrane. The chain is MICOS complex subunit MIC13 homolog QIL1 from Drosophila melanogaster (Fruit fly).